Reading from the N-terminus, the 966-residue chain is Catenin alpha-2 (966 aa).

Residues 924–940 (PEKKPLVKREKPEEYQT) are compositionally biased toward basic and acidic residues. A disordered region spans residues 924 to 952 (PEKKPLVKREKPEEYQTRVRRGSQKKHIS). Over residues 941-951 (RVRRGSQKKHI) the composition is skewed to basic residues.

This sequence belongs to the vinculin/alpha-catenin family.

Its subcellular location is the cell membrane. The protein localises to the cytoplasm. The protein resides in the cytoskeleton. It localises to the cell junction. It is found in the adherens junction. Its subcellular location is the cell projection. The protein localises to the axon. The protein resides in the nucleus. In terms of biological role, may function as a linker between cadherin adhesion receptors and the cytoskeleton to regulate cell-cell adhesion and differentiation in the nervous system. This chain is Catenin alpha-2 (ctnna2), found in Xenopus laevis (African clawed frog).